Consider the following 1482-residue polypeptide: Glutamate receptor ionotropic, NMDA 2B (1482 aa).

Residues 1–26 (MKPSAECCSPKFWLVLAVLAVSGSKA) form the signal peptide. Residues 27–557 (RSQKSPPSIG…SAFLEPFSAD (531 aa)) are Extracellular-facing. A glycan (N-linked (GlcNAc...) asparagine) is linked at Asn74. A disulfide bridge links Cys86 with Cys321. Positions 127 and 284 each coordinate Zn(2+). 4 N-linked (GlcNAc...) asparagine glycosylation sites follow: Asn341, Asn348, Asn444, and Asn491. Cystine bridges form between Cys429–Cys456 and Cys436–Cys457. 2 residues coordinate L-glutamate: Thr514 and Arg519. Asn542 carries N-linked (GlcNAc...) asparagine glycosylation. A helical membrane pass occupies residues 558–576 (VWVMMFVMLLIVSAVAVFV). Residues 577 to 603 (FEYFSPVGYNRCLADGREPGGPSFTIG) lie on the Cytoplasmic side of the membrane. The segment at residues 604 to 623 (KAIWLLWGLVFNNSVPVQNP) is an intramembrane region (discontinuously helical). The tract at residues 604–623 (KAIWLLWGLVFNNSVPVQNP) is pore-forming. Residues 624–630 (KGTTSKI) lie on the Cytoplasmic side of the membrane. Residues 631 to 646 (MVSVWAFFAVIFLASY) traverse the membrane as a helical segment. Over 647-817 (TANLAAFMIQ…VMSSQLDIDN (171 aa)) the chain is Extracellular. Residue Asn688 is glycosylated (N-linked (GlcNAc...) asparagine). Residues Ser690, Thr691, and Asp732 each coordinate L-glutamate. Residues Cys746 and Cys801 are joined by a disulfide bond. A helical transmembrane segment spans residues 818-837 (MAGVFYMLGAAMALSLITFI). The Cytoplasmic portion of the chain corresponds to 838 to 1482 (CEHLFYWQFR…EKLSSIESDV (645 aa)). A phosphoserine mark is found at Ser882, Ser886, Ser917, and Ser920. 2 positions are modified to phosphotyrosine: Tyr962 and Tyr1039. 3 positions are modified to phosphoserine: Ser1058, Ser1061, and Ser1064. A phosphotyrosine mark is found at Tyr1109 and Tyr1133. Position 1143 is a phosphoserine (Ser1143). Tyr1155 carries the post-translational modification Phosphotyrosine. The segment at 1161 to 1194 (DFKRDSVSGGGPCTNRSHLKHGTGEKHGVVGGVP) is disordered. Ser1255 and Ser1259 each carry phosphoserine. Residues 1269-1301 (PVAVTSNASSTKYPQSPTNSKAQKKNRNKLRRQ) form a disordered region. Polar residues predominate over residues 1272–1289 (VTSNASSTKYPQSPTNSK). Over residues 1290–1301 (AQKKNRNKLRRQ) the composition is skewed to basic residues. The tract at residues 1292 to 1304 (KKNRNKLRRQHSY) is interaction with DAPK1. Phosphoserine is present on Ser1303. Tyr1472 carries the post-translational modification Phosphotyrosine. The short motif at 1480-1482 (SDV) is the PDZ-binding element.

This sequence belongs to the glutamate-gated ion channel (TC 1.A.10.1) family. NR2B/GRIN2B subfamily. Heterotetramer. Forms heterotetrameric channels composed of two GluN1/zeta subunits (GRIN1), and two identical GluN2/epsilon subunits (GRIN2A, GRIN2B, GRIN2C or GRIN2D) or GluN3 subunits (GRIN3A or GRIN3B) (in vitro). Can also form heterotetrameric channels that contain at least two GluN1 subunits and at least two different GluN2 subunits (or a combination of one GluN2 and one GluN3 subunits) (in vitro). In vivo, the subunit composition may depend on the expression levels of the different subunits. Found in a complex with GRIN1, GRIN3A and PPP2CB. Found in a complex with GRIN1 and GRIN3B. Interacts with MAGI3. Interacts with HIP1 and NETO1. Interacts with PDZ domains of PATJ, DLG3 and DLG4. Interacts with DAPK1. Found in a complex with GRIN1 and PRR7. Interacts with PRR7. Interacts with CAMK2A. Interacts with ARC; preventing ARC oligomerization. Interacts with TMEM25. Interacts (via the extreme C-terminus) with FRMPD2 (via the second PDZ domain); the interaction is direct and is likely to promote NMDAR-mediated neural signal transmission. Interacts with FAM81A; the interaction facilitates condensate formation via liquid-liquid phase separation. In terms of processing, phosphorylated on tyrosine residues. Phosphorylation at Ser-1303 by DAPK1 enhances synaptic NMDA receptor channel activity. In terms of tissue distribution, expressed in the hippocampus including the dentate gyrus (at protein level). Detected in adult olfactory bulb, brain cortex, hippocampus, striatum, thalamus, superior colliculus, with much lower levels in inferior colliculus, midbrain and cerebellum.

The protein resides in the cell membrane. The protein localises to the postsynaptic cell membrane. Its subcellular location is the late endosome. It is found in the lysosome. It localises to the cytoplasm. The protein resides in the cytoskeleton. The catalysed reaction is Ca(2+)(in) = Ca(2+)(out). It catalyses the reaction Na(+)(in) = Na(+)(out). It carries out the reaction K(+)(in) = K(+)(out). NMDA glutamate receptor activity is inhibited by micromolar levels of zinc ions. NMDA glutamate receptor activity is inhibited by ifenprodil. Its function is as follows. Component of N-methyl-D-aspartate (NMDA) receptors (NMDARs) that function as heterotetrameric, ligand-gated cation channels with high calcium permeability and voltage-dependent block by Mg(2+). Participates in synaptic plasticity for learning and memory formation by contributing to the long-term depression (LTD) of hippocampus membrane currents. Channel activation requires binding of the neurotransmitter L-glutamate to the GluN2 subunit, glycine or D-serine binding to the GluN1 subunit, plus membrane depolarization to eliminate channel inhibition by Mg(2+). NMDARs mediate simultaneously the potasium efflux and the influx of calcium and sodium. Each GluN2 subunit confers differential attributes to channel properties, including activation, deactivation and desensitization kinetics, pH sensitivity, Ca2(+) permeability, and binding to allosteric modulators. In concert with DAPK1 at extrasynaptic sites, acts as a central mediator for stroke damage. Its phosphorylation at Ser-1303 by DAPK1 enhances synaptic NMDA receptor channel activity inducing injurious Ca2+ influx through them, resulting in an irreversible neuronal death. In Rattus norvegicus (Rat), this protein is Glutamate receptor ionotropic, NMDA 2B.